A 324-amino-acid chain; its full sequence is MEPASKKSKMGKNVKFNNNKKKYFHAKRQTLQPGQRGFFATCNINEKACVRECYNLLNHYADILYGSEKPENEPEKKQPEEGAGGDAGEDDPKPAAGGTSDDDDDLEAAAAKCREMLSQRKMRFQNVDTNTTNCVFIRTQLEDPVALGKHIINDIATTGKSMSRFVLRLVPIEVVCRANMPDIITAAGELFDKHFLKEPTSYGIIFNHRYNQQIKRDQIITQLAELVNSKNVGNKVDLKEAKKSIIVEVLRGWCLLSVIDNYLECKKFNLAELANPSDKKSSGEGDSKSETSEVANGNDKEQAESSEESKSNDDENKDSTENDK.

Disordered regions lie at residues Met1–Phe24 and Ser67–Asp104. Residues Glu68 to Glu80 are compositionally biased toward basic and acidic residues. A Phosphothreonine modification is found at Thr99. Ser100 carries the post-translational modification Phosphoserine. Residues Asp154–Asp260 form the THUMP domain. The tract at residues Asn275–Lys324 is disordered. 2 stretches are compositionally biased toward basic and acidic residues: residues Ser277–Thr291 and Asn298–Lys324.

The protein belongs to the THUMPD1 family.

The sequence is that of THUMP domain-containing protein 1 homolog from Drosophila melanogaster (Fruit fly).